The primary structure comprises 104 residues: Large ribosomal subunit protein uL24 (104 aa).

It belongs to the universal ribosomal protein uL24 family. In terms of assembly, part of the 50S ribosomal subunit.

Functionally, one of two assembly initiator proteins, it binds directly to the 5'-end of the 23S rRNA, where it nucleates assembly of the 50S subunit. One of the proteins that surrounds the polypeptide exit tunnel on the outside of the subunit. The polypeptide is Large ribosomal subunit protein uL24 (Pseudomonas fluorescens (strain ATCC BAA-477 / NRRL B-23932 / Pf-5)).